Here is a 949-residue protein sequence, read N- to C-terminus: General transcription factor II-I repeat domain-containing protein 2B (949 aa).

GTF2I-like repeat units lie at residues 98–192 (QVHS…QLGG) and 323–417 (LSSI…SNVG).

It belongs to the TFII-I family. In terms of tissue distribution, ubiquitous.

The protein localises to the nucleus. The polypeptide is General transcription factor II-I repeat domain-containing protein 2B (GTF2IRD2B) (Homo sapiens (Human)).